A 358-amino-acid polypeptide reads, in one-letter code: Molybdenum import ATP-binding protein ModC (358 aa).

In terms of domain architecture, ABC transporter spans 2–234 (NDDISASFFS…PDLPLAHLEE (233 aa)). 34–41 (GRSGSGKT) is an ATP binding site. The 66-residue stretch at 293-358 (LSSISNCIPV…AQVKSVALID (66 aa)) folds into the Mop domain.

It belongs to the ABC transporter superfamily. Molybdate importer (TC 3.A.1.8) family. The complex is composed of two ATP-binding proteins (ModC), two transmembrane proteins (ModB) and a solute-binding protein (ModA).

Its subcellular location is the cell inner membrane. It catalyses the reaction molybdate(out) + ATP + H2O = molybdate(in) + ADP + phosphate + H(+). Functionally, part of the ABC transporter complex ModABC involved in molybdenum import. Responsible for energy coupling to the transport system. This is Molybdenum import ATP-binding protein ModC from Hahella chejuensis (strain KCTC 2396).